The following is a 448-amino-acid chain: Phosphohexose mutases (448 aa).

The active-site Phosphoserine intermediate is Ser97. The Mg(2+) site is built by Ser97, Asp237, Asp239, and Asp241.

This sequence belongs to the phosphohexose mutase family. The cofactor is Mg(2+).

The enzyme catalyses alpha-D-glucose 1-phosphate = alpha-D-glucose 6-phosphate. It catalyses the reaction alpha-D-mannose 1-phosphate = D-mannose 6-phosphate. It participates in nucleotide-sugar biosynthesis; GDP-alpha-D-mannose biosynthesis; alpha-D-mannose 1-phosphate from D-fructose 6-phosphate: step 2/2. Functionally, involved in xanthan production. In Xanthomonas campestris pv. campestris (strain ATCC 33913 / DSM 3586 / NCPPB 528 / LMG 568 / P 25), this protein is Phosphohexose mutases (xanA).